We begin with the raw amino-acid sequence, 72 residues long: Conorfamide-Tx2 (72 aa).

The signal sequence occupies residues 1–19; that stretch reads MSGRGFLLLALLLLVTVEA. Positions 20-25 are excised as a propeptide; the sequence is TRVEKK. Positions 32–39 are positively charged region crucial for activity against MRGPRX1 receptors; that stretch reads AWSGPRNR. Residue I43 is modified to Isoleucine amide. A propeptide spanning residues 44 to 72 is cleaved from the precursor; sequence GRRDMQSPLLSERLRFRALGFRQPSSQKQ.

The protein belongs to the FARP (FMRFamide related peptide) family. In terms of tissue distribution, expressed by the venom duct.

The protein resides in the secreted. This peptide activates human sensory neuron-specific G-protein coupled receptors MRGPRX1, but not mouse receptors (EC(50)=0.54 uM). Compared with the agonist chloroquine (anti-malaria drug), it is 600-fold more potent. In vivo, induces itch sensation, since intradermal cheek injection into humanized transgenic mouse (mouse MRGPRX1 replaced by human MRGPRX1) induces scratching. In vivo, treatment of zebrafish larvae with high doses (10 uM) induces hypoactivity at the beginning of the experiment during the dark phase and hyperactivity in the strobe phase after one hour, even after the removal of the toxin from the solution. This is Conorfamide-Tx2 from Conus textile (Cloth-of-gold cone).